Consider the following 400-residue polypeptide: Homoserine O-acetyltransferase (400 aa).

The segment at 1 to 22 (MMNVHPVKGPVATGGERPHEAD) is disordered. Residues 64–374 (NAILVCHALT…DKGHDAFLLD (311 aa)) enclose the AB hydrolase-1 domain. The active-site Nucleophile is S169. R239 is a substrate binding site. Active-site residues include D335 and H368. D369 is a substrate binding site.

Belongs to the AB hydrolase superfamily. MetX family. As to quaternary structure, homodimer.

The protein resides in the cytoplasm. It catalyses the reaction L-homoserine + acetyl-CoA = O-acetyl-L-homoserine + CoA. The protein operates within amino-acid biosynthesis; L-methionine biosynthesis via de novo pathway; O-acetyl-L-homoserine from L-homoserine: step 1/1. Functionally, transfers an acetyl group from acetyl-CoA to L-homoserine, forming acetyl-L-homoserine. This chain is Homoserine O-acetyltransferase, found in Rhodopseudomonas palustris (strain HaA2).